A 131-amino-acid polypeptide reads, in one-letter code: Profilin (131 aa).

It belongs to the profilin family. As to quaternary structure, occurs in many kinds of cells as a complex with monomeric actin in a 1:1 ratio.

It localises to the cytoplasm. Its subcellular location is the cytoskeleton. Binds to actin and affects the structure of the cytoskeleton. At high concentrations, profilin prevents the polymerization of actin, whereas it enhances it at low concentrations. By binding to PIP2, it inhibits the formation of IP3 and DG. The polypeptide is Profilin (PRO1) (Cynodon dactylon (Bermuda grass)).